A 289-amino-acid polypeptide reads, in one-letter code: Inorganic pyrophosphatase (289 aa).

Ser2 carries the post-translational modification N-acetylserine. N6-acetyllysine is present on Lys57. Residues Asp116, Asp121, and Asp153 each coordinate Mg(2+). Lys228 bears the N6-acetyllysine mark. A Phosphoserine modification is found at Ser250.

This sequence belongs to the PPase family. As to quaternary structure, homodimer. Mg(2+) serves as cofactor.

The protein resides in the cytoplasm. The catalysed reaction is diphosphate + H2O = 2 phosphate + H(+). The sequence is that of Inorganic pyrophosphatase (PPA1) from Pongo abelii (Sumatran orangutan).